The sequence spans 239 residues: Phosphoribosylaminoimidazole-succinocarboxamide synthase (239 aa).

This sequence belongs to the SAICAR synthetase family.

It catalyses the reaction 5-amino-1-(5-phospho-D-ribosyl)imidazole-4-carboxylate + L-aspartate + ATP = (2S)-2-[5-amino-1-(5-phospho-beta-D-ribosyl)imidazole-4-carboxamido]succinate + ADP + phosphate + 2 H(+). It participates in purine metabolism; IMP biosynthesis via de novo pathway; 5-amino-1-(5-phospho-D-ribosyl)imidazole-4-carboxamide from 5-amino-1-(5-phospho-D-ribosyl)imidazole-4-carboxylate: step 1/2. The protein is Phosphoribosylaminoimidazole-succinocarboxamide synthase of Psychrobacter sp. (strain PRwf-1).